Reading from the N-terminus, the 520-residue chain is Cytochrome P450 72A397 (520 aa).

A helical membrane pass occupies residues 14–34; that stretch reads AVAVAVVVVGWAWKVLNWVWV. Position 468 (Cys468) interacts with heme.

Belongs to the cytochrome P450 family. The cofactor is heme.

Its subcellular location is the membrane. It catalyses the reaction oleanolate + reduced [NADPH--hemoprotein reductase] + O2 = hederagenin + oxidized [NADPH--hemoprotein reductase] + H2O + H(+). In terms of biological role, catalyzes the oxidation of oleanolate at the C-23 position to form hederagenin. This is Cytochrome P450 72A397 from Kalopanax septemlobus (Castor aralia).